The sequence spans 54 residues: Small ribosomal subunit protein uS14 (54 aa).

Residues cysteine 19, cysteine 22, cysteine 37, and cysteine 40 each contribute to the Zn(2+) site.

Belongs to the universal ribosomal protein uS14 family. Zinc-binding uS14 subfamily. Part of the 30S ribosomal subunit. Requires Zn(2+) as cofactor.

Its function is as follows. Binds 16S rRNA, required for the assembly of 30S particles. The chain is Small ribosomal subunit protein uS14 from Pyrobaculum aerophilum (strain ATCC 51768 / DSM 7523 / JCM 9630 / CIP 104966 / NBRC 100827 / IM2).